The chain runs to 150 residues: Arginine repressor (150 aa).

The protein belongs to the ArgR family.

Its subcellular location is the cytoplasm. It participates in amino-acid biosynthesis; L-arginine biosynthesis [regulation]. Its function is as follows. Regulates arginine biosynthesis genes. In Desulfitobacterium hafniense (strain DSM 10664 / DCB-2), this protein is Arginine repressor.